The following is a 609-amino-acid chain: MSRSAAASGGPRRPERHLPPAPCGAPGPPETCRTEPDGAGTMNKLRQSLRRRKPAYVPEASRPHQWQADEDAVRKGTCSFPVRYLGHVEVEESRGMHVCEDAVKKLKAMGRKSVKSVLWVSADGLRVVDDKTKDLLVDQTIEKVSFCAPDRNLDKAFSYICRDGTTRRWICHCFLALKDSGERLSHAVGCAFAACLERKQRREKECGVTAAFDASRTSFAREGSFRLSGGGRPAEREAPDKKKAEAAAAPTVAPGPAQPGHVSPTPATTSPGEKGEAGTPVAAGTTAAAIPRRHAPLEQLVRQGSFRGFPALSQKNSPFKRQLSLRLNELPSTLQRRTDFQVKGTVPEMEPPGAGDSDSINALCTQISSSFASAGAPAPGPPPATTGTSAWGEPSVPPAAAFQPGHKRTPSEAERWLEEVSQVAKAQQQQQQQQQQQQQQQQQQQQAASVAPVPTMPPALQPFPAPVGPFDAAPAQVAVFLPPPHMQPPFVPAYPGLGYPPMPRVPVVGITPSQMVANAFCSAAQLQPQPATLLGKAGAFPPPAIPSAPGSQARPRPNGAPWPPEPAPAPAPELDPFEAQWAALEGKATVEKPSNPFSGDLQKTFEIEL.

Disordered stretches follow at residues 1 to 68 (MSRS…QWQA), 223 to 283 (GSFR…PVAA), 372 to 421 (ASAG…EEVS), 434 to 464 (QQQQQQQQQQQQQAASVAPVPTMPPALQPFP), and 537 to 609 (AGAF…EIEL). Positions 19 to 29 (PPAPCGAPGPP) are enriched in pro residues. The 150-residue stretch at 74-223 (RKGTCSFPVR…ASRTSFAREG (150 aa)) folds into the PID domain. 2 positions are modified to phosphoserine: Ser224 and Ser228. Residues 233 to 245 (PAEREAPDKKKAE) show a composition bias toward basic and acidic residues. The segment covering 246–259 (AAAAPTVAPGPAQP) has biased composition (low complexity). Ser263 is modified (phosphoserine). Phosphothreonine is present on Thr279. The segment covering 409–418 (TPSEAERWLE) has biased composition (basic and acidic residues). Ser411 is modified (phosphoserine). Residues 434-446 (QQQQQQQQQQQQQ) show a composition bias toward low complexity. Composition is skewed to pro residues over residues 454–464 (PTMPPALQPFP) and 558–573 (NGAPWPPEPAPAPAPE).

Interacts (via PTB domain) with MAP3K7IP2 (via C-terminal). Interacts (via C-terminal) with TRAF6 (via TRAF domains). Associates with EPS15 and NOTCH1.

Its subcellular location is the cytoplasm. Plays a role in the process of neurogenesis. Required throughout embryonic neurogenesis to maintain neural progenitor cells, also called radial glial cells (RGCs), by allowing their daughter cells to choose progenitor over neuronal cell fate. Not required for the proliferation of neural progenitor cells before the onset of embryonic neurogenesis. Also required postnatally in the subventricular zone (SVZ) neurogenesis by regulating SVZ neuroblasts survival and ependymal wall integrity. Negative regulator of NF-kappa-B signaling pathway. The inhibition of NF-kappa-B activation is mediated at least in part, by preventing MAP3K7IP2 to interact with polyubiquitin chains of TRAF6 and RIPK1 and by stimulating the 'Lys-48'-linked polyubiquitination and degradation of TRAF6 in cortical neurons. This Homo sapiens (Human) protein is Numb-like protein (NUMBL).